The sequence spans 552 residues: Small ribosomal subunit protein bS1 (552 aa).

S1 motif domains lie at 31–101, 116–179, 200–268, 285–355, 372–440, and 457–521; these read TIKE…ISQQ, NAII…ISRK, TEPV…LSIK, GYAI…VSLK, GDIV…LSAK, and DSVI…ASVH.

Belongs to the bacterial ribosomal protein bS1 family.

In terms of biological role, binds mRNA; thus facilitating recognition of the initiation point. It is needed to translate mRNA with a short Shine-Dalgarno (SD) purine-rich sequence. This chain is Small ribosomal subunit protein bS1 (rpsA), found in Helicobacter pylori (strain J99 / ATCC 700824) (Campylobacter pylori J99).